The sequence spans 348 residues: Thioredoxin-related protein DsbJ (348 aa).

An N-terminal signal peptide occupies residues 1–32; the sequence is MILLQNIKRCSLKQLKVLATLLLSLSLPTLEA.

It localises to the periplasm. The protein is Thioredoxin-related protein DsbJ (dsbJ) of Chlamydia pneumoniae (Chlamydophila pneumoniae).